The chain runs to 147 residues: Large ribosomal subunit protein uL15 (147 aa).

Residues 1–54 form a disordered region; sequence MRLSDIKPTPGSMKKRTRVGRGIGSGKGKTSGKGHKGQKARGRGKVHPWFEGGQ. Residues 30-46 are compositionally biased toward basic residues; that stretch reads TSGKGHKGQKARGRGKV.

The protein belongs to the universal ribosomal protein uL15 family. Part of the 50S ribosomal subunit.

In terms of biological role, binds to the 23S rRNA. The protein is Large ribosomal subunit protein uL15 of Thermosipho melanesiensis (strain DSM 12029 / CIP 104789 / BI429).